A 419-amino-acid polypeptide reads, in one-letter code: Phospho-N-acetylmuramoyl-pentapeptide-transferase (419 aa).

10 helical membrane passes run Tyr22–Gly42, Thr72–Ala92, Ile99–Ile119, Ile135–Val155, Val208–Asn228, Gly238–Ser258, Leu278–Tyr298, Phe303–Ile323, Leu328–Phe348, and Lys396–Leu416.

The protein belongs to the glycosyltransferase 4 family. MraY subfamily. Mg(2+) serves as cofactor.

It localises to the cell inner membrane. It catalyses the reaction UDP-N-acetyl-alpha-D-muramoyl-L-alanyl-gamma-D-glutamyl-meso-2,6-diaminopimeloyl-D-alanyl-D-alanine + di-trans,octa-cis-undecaprenyl phosphate = di-trans,octa-cis-undecaprenyl diphospho-N-acetyl-alpha-D-muramoyl-L-alanyl-D-glutamyl-meso-2,6-diaminopimeloyl-D-alanyl-D-alanine + UMP. Its pathway is cell wall biogenesis; peptidoglycan biosynthesis. Catalyzes the initial step of the lipid cycle reactions in the biosynthesis of the cell wall peptidoglycan: transfers peptidoglycan precursor phospho-MurNAc-pentapeptide from UDP-MurNAc-pentapeptide onto the lipid carrier undecaprenyl phosphate, yielding undecaprenyl-pyrophosphoryl-MurNAc-pentapeptide, known as lipid I. This is Phospho-N-acetylmuramoyl-pentapeptide-transferase from Porphyromonas gingivalis (strain ATCC 33277 / DSM 20709 / CIP 103683 / JCM 12257 / NCTC 11834 / 2561).